The sequence spans 264 residues: Orotidine 5'-phosphate decarboxylase (264 aa).

Residues D40, 62 to 64, 93 to 102, Y214, and R233 each bind substrate; these read KTH and DRKFADIGNT. The Proton donor role is filled by K95.

Belongs to the OMP decarboxylase family.

The enzyme catalyses orotidine 5'-phosphate + H(+) = UMP + CO2. Its pathway is pyrimidine metabolism; UMP biosynthesis via de novo pathway; UMP from orotate: step 2/2. The sequence is that of Orotidine 5'-phosphate decarboxylase (ura4) from Schizosaccharomyces pombe (strain 972 / ATCC 24843) (Fission yeast).